Consider the following 212-residue polypeptide: RING-H2 finger protein ATL68 (212 aa).

A helical transmembrane segment spans residues 24–44; sequence LGLGYSIAIALGFLVLISTII. The RING-type; atypical zinc finger occupies 136-178; it reads CSICLCEYMEEEMLRMMPECKHYFHVYCLDAWLKLNGSCPVCR. The disordered stretch occupies residues 182–212; that stretch reads LPTPQSTPQSTPLSEVVPLSQYAADRRRSRR. Over residues 185–195 the composition is skewed to low complexity; the sequence is PQSTPQSTPLS.

This sequence belongs to the RING-type zinc finger family. ATL subfamily.

The protein resides in the membrane. It catalyses the reaction S-ubiquitinyl-[E2 ubiquitin-conjugating enzyme]-L-cysteine + [acceptor protein]-L-lysine = [E2 ubiquitin-conjugating enzyme]-L-cysteine + N(6)-ubiquitinyl-[acceptor protein]-L-lysine.. The protein operates within protein modification; protein ubiquitination. The chain is RING-H2 finger protein ATL68 (ATL68) from Arabidopsis thaliana (Mouse-ear cress).